A 116-amino-acid chain; its full sequence is Large ribosomal subunit protein bL19 (116 aa).

It belongs to the bacterial ribosomal protein bL19 family.

In terms of biological role, this protein is located at the 30S-50S ribosomal subunit interface and may play a role in the structure and function of the aminoacyl-tRNA binding site. This chain is Large ribosomal subunit protein bL19, found in Pseudomonas fluorescens (strain ATCC BAA-477 / NRRL B-23932 / Pf-5).